Here is a 174-residue protein sequence, read N- to C-terminus: NADH-ubiquinone oxidoreductase chain 6 (174 aa).

Transmembrane regions (helical) follow at residues 1–21 (MTYV…GFSS), 24–44 (SPIY…AIIL), 47–67 (GGGY…MVVF), 86–106 (VEVL…VLWV), and 151–171 (WLVV…IEIA).

The protein belongs to the complex I subunit 6 family. Core subunit of respiratory chain NADH dehydrogenase (Complex I) which is composed of 45 different subunits.

It is found in the mitochondrion inner membrane. The catalysed reaction is a ubiquinone + NADH + 5 H(+)(in) = a ubiquinol + NAD(+) + 4 H(+)(out). Its function is as follows. Core subunit of the mitochondrial membrane respiratory chain NADH dehydrogenase (Complex I) which catalyzes electron transfer from NADH through the respiratory chain, using ubiquinone as an electron acceptor. Essential for the catalytic activity and assembly of complex I. The protein is NADH-ubiquinone oxidoreductase chain 6 (MT-ND6) of Gorilla gorilla gorilla (Western lowland gorilla).